Reading from the N-terminus, the 434-residue chain is Phosphomethylpyrimidine synthase 2 (434 aa).

Substrate is bound by residues Met94, Tyr123, His162, 184-186 (SRG), 225-228 (NAMR), and Glu264. His268 is a Zn(2+) binding site. Tyr291 contributes to the substrate binding site. His332 lines the Zn(2+) pocket. Residues Cys408, Cys411, and Cys415 each coordinate [4Fe-4S] cluster.

It belongs to the ThiC family. [4Fe-4S] cluster serves as cofactor.

The catalysed reaction is 5-amino-1-(5-phospho-beta-D-ribosyl)imidazole + S-adenosyl-L-methionine = 4-amino-2-methyl-5-(phosphooxymethyl)pyrimidine + CO + 5'-deoxyadenosine + formate + L-methionine + 3 H(+). Its pathway is cofactor biosynthesis; thiamine diphosphate biosynthesis. Functionally, catalyzes the synthesis of the hydroxymethylpyrimidine phosphate (HMP-P) moiety of thiamine from aminoimidazole ribotide (AIR) in a radical S-adenosyl-L-methionine (SAM)-dependent reaction. The sequence is that of Phosphomethylpyrimidine synthase 2 from Methanosphaera stadtmanae (strain ATCC 43021 / DSM 3091 / JCM 11832 / MCB-3).